A 167-amino-acid polypeptide reads, in one-letter code: NAD(P)H-quinone oxidoreductase subunit I, chloroplastic (167 aa).

4Fe-4S ferredoxin-type domains lie at 55–84 (GRIHFEFDKCIACEVCVRVCPIDLPVVDWK) and 95–124 (LNYSIDFGICIFCGNCVEYCPTNCLSMTEE). [4Fe-4S] cluster-binding residues include Cys-64, Cys-67, Cys-70, Cys-74, Cys-104, Cys-107, Cys-110, and Cys-114.

This sequence belongs to the complex I 23 kDa subunit family. NDH is composed of at least 16 different subunits, 5 of which are encoded in the nucleus. [4Fe-4S] cluster is required as a cofactor.

It localises to the plastid. The protein localises to the chloroplast thylakoid membrane. It carries out the reaction a plastoquinone + NADH + (n+1) H(+)(in) = a plastoquinol + NAD(+) + n H(+)(out). The catalysed reaction is a plastoquinone + NADPH + (n+1) H(+)(in) = a plastoquinol + NADP(+) + n H(+)(out). NDH shuttles electrons from NAD(P)H:plastoquinone, via FMN and iron-sulfur (Fe-S) centers, to quinones in the photosynthetic chain and possibly in a chloroplast respiratory chain. The immediate electron acceptor for the enzyme in this species is believed to be plastoquinone. Couples the redox reaction to proton translocation, and thus conserves the redox energy in a proton gradient. The protein is NAD(P)H-quinone oxidoreductase subunit I, chloroplastic of Solanum tuberosum (Potato).